The chain runs to 331 residues: MQIITIFGATGNQGSSVARSLLRNRSFEVRCITRNAESKKAQLLKAQGAVIVEADGYDTSQIQQAFSGSWGAFVNTNGDDPSLASENRTDRDLGLSIIRGAAAAGVKHLVYSSGPWAAKLSGGACSVPSNDAKAEVQHVAQGLGFETVTPIMPGWFFETFLEPQMAAIFGGFPVTPDEEGWLTCRAPLWGGREHVPFLSVDNDFGDIVHGVFLNPVRWNLRPIQAISDFLSFADFVNTYVSLTGKKARFVALSSPMEMETMGHPLLESIRGFFIFSQLRDGEYFGTGPTEKETATALKQAAHRAQANDRKGEQAALTSARDFLQARFGNSK.

Residues 8–13 (GATGNQ), 34–38 (RNAES), 55–56 (DG), 76–78 (TNG), lysine 133, and 155–167 (WFFE…QMAA) each bind NADP(+).

It belongs to the NmrA-type oxidoreductase family.

It functions in the pathway secondary metabolite biosynthesis. Functionally, nmrA-like family domain-containing oxidoreductase; part of the him gene cluster that mediates the biosynthesis of himeic acid A, a ubiquitin-activating enzyme (E1) inhibitor. First, himA, together with the trans-enoyl reductase himH, catalyzes the formation of apolyketide chain, which is then condensed with leucine by the NRPS activity of himA. Dieckmann cyclization and release from himA gives a tetramic acid intermediate as the product of himA PKS-NRPS. HimG then catalyzes alpha-oxidation of the tetramic acid ring, with a subsequent rearrangement to yield apyrone intermediate. Two terminal methyl groups of polyketide and amide side chains are oxidized to carboxylic acids by himC cytochrome P450 monooxygenase to form himeic acid A. Himeic acid A is further converted to himeic acid B and C during culture growth. No gene responsible for pyrone to pyridone conversion was found in the him gene cluster and himeic acid A is non-enzymatically converted to himeic acid C by the incorporation of an ammonium nitrogen atom in a pH5 buffer, and to himeic acid B at a conversion ratio of 50% during incubation in MeOH for 5 days. This is NmrA-like family domain-containing oxidoreductase himF from Aspergillus japonicus.